The primary structure comprises 293 residues: AKT-interacting protein homolog A (293 aa).

A compositionally biased stretch (polar residues) spans 1 to 11 (MNPFWNMSSAS). The segment at 1-45 (MNPFWNMSSASVRKRSENDEKISTGDQKISPPRSSSAKKQLPPIP) is disordered. Residues 14-23 (KRSENDEKIS) are compositionally biased toward basic and acidic residues. The segment covering 24-38 (TGDQKISPPRSSSAK) has biased composition (polar residues). In terms of domain architecture, UBC core spans 75 to 223 (YLEYSLLAEF…VVDSVKLCNS (149 aa)). Basic and acidic residues predominate over residues 256–266 (AQKKKSEEQSK). Residues 256–293 (AQKKKSEEQSKGLHVSGLSWVKPGSVLPFSKEENSLQT) are disordered.

It belongs to the ubiquitin-conjugating enzyme family. FTS subfamily.

It localises to the cytoplasm. Its subcellular location is the cell membrane. Functionally, may function to promote vesicle trafficking and/or fusion. May also regulate apoptosis. The polypeptide is AKT-interacting protein homolog A (aktip-a) (Xenopus laevis (African clawed frog)).